The sequence spans 126 residues: Large ribosomal subunit protein bL12 (126 aa).

The protein belongs to the bacterial ribosomal protein bL12 family. Homodimer. Part of the ribosomal stalk of the 50S ribosomal subunit. Forms a multimeric L10(L12)X complex, where L10 forms an elongated spine to which 2 to 4 L12 dimers bind in a sequential fashion. Binds GTP-bound translation factors.

Its function is as follows. Forms part of the ribosomal stalk which helps the ribosome interact with GTP-bound translation factors. Is thus essential for accurate translation. The chain is Large ribosomal subunit protein bL12 from Caulobacter sp. (strain K31).